A 2126-amino-acid polypeptide reads, in one-letter code: Phthioceranic/hydroxyphthioceranic acid synthase (2126 aa).

Residues 24–447 enclose the Ketosynthase family 3 (KS3) domain; sequence VTPVAVIGMA…GTNVHAVVEQ (424 aa). Cys-196 serves as the catalytic Acyl-thioester intermediate; for beta-ketoacyl synthase activity. Catalysis depends on for beta-ketoacyl synthase activity residues His-331 and His-367. The linker domain (LD) stretch occupies residues 449-549; the sequence is PQTEAQPHAA…VYQPAVGQDD (101 aa). Residues 550-849 are acyltransferase (AT); that stretch reads RGPVWLFSGQ…VAALAGMRRE (300 aa). The active-site Acyl-ester intermediate; for acyltransferase activity is the Ser-641. The interval 909-1191 is dehydratase (DH); the sequence is STVAVHPLLG…LAVCGLRIGT (283 aa). The segment at 914–1032 is N-terminal hotdog fold; it reads HPLLGAHVRL…RRASAVLQQV (119 aa). Residues 914-1198 form the PKS/mFAS DH domain; it reads HPLLGAHVRL…IGTGVSERDK (285 aa). The active-site Proton acceptor; for dehydratase activity is the His-947. Positions 1051-1198 are C-terminal hotdog fold; sequence PCRVDGEDLR…IGTGVSERDK (148 aa). Asp-1115 functions as the Proton donor; for dehydratase activity in the catalytic mechanism. Residues 1227–1398 are pseudo beta-ketoacyl reductase (PsiKR); that stretch reads KWLLISDCAA…SEEDETAWRD (172 aa). Residues 1426 to 1750 form an enoylreductase (ER) region; sequence SGMRLQIRTP…EHTGKLVLHI (325 aa). Positions 1772–2019 are beta-ketoacyl reductase (KR); the sequence is GSYIITGGLG…AERSRFFEVF (248 aa). NADP(+)-binding positions include 1780–1783, 1803–1806, 1831–1832, and 1904–1905; these read LGGL, SRTQ, DI, and FS. One can recognise a Carrier domain in the interval 2040–2126; it reads DEWPARLRQL…DAPAAALSSQ (87 aa). At Ser-2075 the chain carries O-(pantetheine 4'-phosphoryl)serine.

Pantetheine 4'-phosphate is required as a cofactor.

The catalysed reaction is hexadecanoyl-[(hydroxy)phthioceranic acid synthase] + 7 (S)-methylmalonyl-CoA + 14 NADPH + 21 H(+) = C37-phthioceranyl-[(hydroxy)phthioceranic acid synthase] + 7 CO2 + 14 NADP(+) + 7 CoA + 7 H2O. It carries out the reaction hexadecanoyl-[(hydroxy)phthioceranic acid synthase] + 8 (S)-methylmalonyl-CoA + 16 NADPH + 24 H(+) = C40-phthioceranyl-[(hydroxy)phthioceranic acid synthase] + 8 CO2 + 16 NADP(+) + 8 CoA + 8 H2O. This chain is Phthioceranic/hydroxyphthioceranic acid synthase (pks2), found in Mycobacterium bovis (strain BCG / Pasteur 1173P2).